The following is a 521-amino-acid chain: Probable glycine dehydrogenase (decarboxylating) subunit 2 (521 aa).

An N6-(pyridoxal phosphate)lysine modification is found at K279.

This sequence belongs to the GcvP family. C-terminal subunit subfamily. In terms of assembly, the glycine cleavage system is composed of four proteins: P, T, L and H. In this organism, the P 'protein' is a heterodimer of two subunits. Requires pyridoxal 5'-phosphate as cofactor.

It carries out the reaction N(6)-[(R)-lipoyl]-L-lysyl-[glycine-cleavage complex H protein] + glycine + H(+) = N(6)-[(R)-S(8)-aminomethyldihydrolipoyl]-L-lysyl-[glycine-cleavage complex H protein] + CO2. Functionally, the glycine cleavage system catalyzes the degradation of glycine. The P protein binds the alpha-amino group of glycine through its pyridoxal phosphate cofactor; CO(2) is released and the remaining methylamine moiety is then transferred to the lipoamide cofactor of the H protein. In Staphylothermus marinus (strain ATCC 43588 / DSM 3639 / JCM 9404 / F1), this protein is Probable glycine dehydrogenase (decarboxylating) subunit 2.